Consider the following 204-residue polypeptide: Phosphoheptose isomerase (204 aa).

The 162-residue stretch at 38-199 folds into the SIS domain; that stretch reads MAVALARGGK…LFEAVMELGP (162 aa). 53 to 55 serves as a coordination point for substrate; it reads NGG. Residues histidine 62 and glutamate 66 each contribute to the Zn(2+) site. Residues glutamate 66, 95–96, 121–123, serine 126, and glutamine 172 each bind substrate; these read ND and STS. Glutamine 172 and histidine 180 together coordinate Zn(2+).

Belongs to the SIS family. GmhA subfamily. Homotetramer. Zn(2+) is required as a cofactor.

It localises to the cytoplasm. It carries out the reaction 2 D-sedoheptulose 7-phosphate = D-glycero-alpha-D-manno-heptose 7-phosphate + D-glycero-beta-D-manno-heptose 7-phosphate. It participates in carbohydrate biosynthesis; D-glycero-D-manno-heptose 7-phosphate biosynthesis; D-glycero-alpha-D-manno-heptose 7-phosphate and D-glycero-beta-D-manno-heptose 7-phosphate from sedoheptulose 7-phosphate: step 1/1. In terms of biological role, catalyzes the isomerization of sedoheptulose 7-phosphate in D-glycero-D-manno-heptose 7-phosphate. The chain is Phosphoheptose isomerase from Solidesulfovibrio magneticus (strain ATCC 700980 / DSM 13731 / RS-1) (Desulfovibrio magneticus).